The chain runs to 453 residues: tRNA hydroxylation protein P (453 aa).

It belongs to the peptidase U32 family.

Functionally, involved in prephenate-dependent formation of 5-hydroxyuridine (ho5U) modification at position 34 in tRNAs, the first step in 5-carboxymethoxyuridine (cmo5U) biosynthesis. Involved differently in ho5U formation in each tRNA; tRNA(Leu3) and tRNA(Pro3) are major targets of TrhP. The sequence is that of tRNA hydroxylation protein P from Escherichia coli (strain K12).